The sequence spans 298 residues: Junctional adhesion molecule B (298 aa).

The first 28 residues, 1–28, serve as a signal peptide directing secretion; the sequence is MARRSRHRLLLLLLRYLVVALGYHKAYG. Over 29–238 the chain is Extracellular; the sequence is FSAPKDQQVV…RMQVDDLNIS (210 aa). An Ig-like V-type domain is found at 32-127; sequence PKDQQVVTAV…GQNLEEDTVT (96 aa). 2 disulfide bridges follow: Cys-50–Cys-109 and Cys-155–Cys-214. N-linked (GlcNAc...) asparagine glycans are attached at residues Asn-98, Asn-187, and Asn-236. In terms of domain architecture, Ig-like C2-type spans 134-238; sequence PAVPSCEVPS…RMQVDDLNIS (105 aa). A helical membrane pass occupies residues 239 to 259; it reads GIIAAVVVVALVISVCGLGVC. Residues 260-298 lie on the Cytoplasmic side of the membrane; sequence YAQRKGYFSKETSFQKSNSSSKATTMSENDFKHTKSFII.

Belongs to the immunoglobulin superfamily. In terms of tissue distribution, highly expressed in heart, placenta, lung, foreskin and lymph node. Prominently expressed on high endothelial venules and also present on the endothelia of other vessels (at protein level). Also expressed in the brain in the caudate nuclei.

It is found in the cell membrane. The protein resides in the cell junction. It localises to the tight junction. In terms of biological role, junctional adhesion protein that mediates heterotypic cell-cell interactions with its cognate receptor JAM3 to regulate different cellular processes. Plays a role in homing and mobilization of hematopoietic stem and progenitor cells within the bone marrow. At the surface of bone marrow stromal cells, it contributes to the retention of the hematopoietic stem and progenitor cells expressing JAM3. Plays a central role in leukocytes extravasation by facilitating not only transmigration but also tethering and rolling of leukocytes along the endothelium. Tethering and rolling of leukocytes are dependent on the binding by JAM2 of the integrin alpha-4/beta-1. Plays a role in spermatogenesis where JAM2 and JAM3, which are respectively expressed by Sertoli and germ cells, mediate an interaction between both cell types and play an essential role in the anchorage of germ cells onto Sertoli cells and the assembly of cell polarity complexes during spermatid differentiation. Also functions as an inhibitory somatodendritic cue that prevents the myelination of non-axonal parts of neurons. During myogenesis, it is involved in myocyte fusion. May also play a role in angiogenesis. This Homo sapiens (Human) protein is Junctional adhesion molecule B.